Here is a 101-residue protein sequence, read N- to C-terminus: MRVKKGDTVVVIAGKDKGKKGSVLKVYPKTSKVLVEGVNVITKHQKPSAMNQQGGIINKEAPIHISNVMPFDPETGKGVRVRYEVKDGNKVRVSAKSGKEL.

The protein belongs to the universal ribosomal protein uL24 family. In terms of assembly, part of the 50S ribosomal subunit.

One of two assembly initiator proteins, it binds directly to the 5'-end of the 23S rRNA, where it nucleates assembly of the 50S subunit. Its function is as follows. One of the proteins that surrounds the polypeptide exit tunnel on the outside of the subunit. This chain is Large ribosomal subunit protein uL24, found in Clostridioides difficile (strain 630) (Peptoclostridium difficile).